We begin with the raw amino-acid sequence, 182 residues long: MSAAMMNKSVVLSKQCTKPAATPKVVTSKRSFASTVANKNREMMVWQPFNNKMFETFSFLPPLTDEQISKQVDYILANSWTPCLEFAASDQAYAGNENCIRMGPVASTYQDNRYWTMWKLPMFGCTDGSQVLSEIQACTNAFPDAYIRLVCFDANRQVQISGFLVHRPPSATDYRLPADRQV.

The transit peptide at 1-41 (MSAAMMNKSVVLSKQCTKPAATPKVVTSKRSFASTVANKNR) directs the protein to the chloroplast.

The protein belongs to the RuBisCO small chain family. As to quaternary structure, heterohexadecamer of 8 large and 8 small subunits.

It is found in the plastid. It localises to the chloroplast. RuBisCO catalyzes two reactions: the carboxylation of D-ribulose 1,5-bisphosphate, the primary event in carbon dioxide fixation, as well as the oxidative fragmentation of the pentose substrate. Both reactions occur simultaneously and in competition at the same active site. Although the small subunit is not catalytic it is essential for maximal activity. This chain is Ribulose bisphosphate carboxylase small subunit, chloroplastic 4, found in Acetabularia acetabulum (Mermaid's wine glass).